The following is a 267-amino-acid chain: MIVHPSRENFSSAVNKGSDFRLKGEPLKHVLLVDDDVAMRHLIIEYLTIHAFKVTAVADSTQFTRVLSSATVDVVVVDLNLGREDGLEIVRNLAAKSDIPIIIISGDRLEETDKVVALELGASDFIAKPFSIREFLARIRVALRVRPNVVRSKDRRSFCFTDWTLNLRQRRLMSEAGGEVKLTAGEFNLLLAFLEKPRDVLSREQLLIASRVRDEEVYDRSIDVLILRLRRKLEADPSSPQLIKTARGAGYFFDADVQVSHGGTMAA.

Residues 29 to 143 (HVLLVDDDVA…EFLARIRVAL (115 aa)) form the Response regulatory domain. Aspartate 78 carries the post-translational modification 4-aspartylphosphate. The ompR/PhoB-type DNA-binding region spans 155–255 (RRSFCFTDWT…ARGAGYFFDA (101 aa)).

Post-translationally, phosphorylated by wide host range (WHR) VirA protein.

It is found in the cytoplasm. In terms of biological role, virG is required for the positive regulation of at least two vir loci encoded by the Ti plasmid of A.tumefaciens. The sequence is that of Regulatory protein VirG (virG) from Agrobacterium tumefaciens (strain 15955).